A 208-amino-acid polypeptide reads, in one-letter code: Uracil phosphoribosyltransferase (208 aa).

Residues arginine 78, arginine 103, and 130–138 (DPMLATGGS) each bind 5-phospho-alpha-D-ribose 1-diphosphate. Uracil contacts are provided by residues isoleucine 193 and 198 to 200 (GDA). A 5-phospho-alpha-D-ribose 1-diphosphate-binding site is contributed by aspartate 199.

This sequence belongs to the UPRTase family. Mg(2+) serves as cofactor.

The enzyme catalyses UMP + diphosphate = 5-phospho-alpha-D-ribose 1-diphosphate + uracil. It participates in pyrimidine metabolism; UMP biosynthesis via salvage pathway; UMP from uracil: step 1/1. Allosterically activated by GTP. Catalyzes the conversion of uracil and 5-phospho-alpha-D-ribose 1-diphosphate (PRPP) to UMP and diphosphate. This Shewanella woodyi (strain ATCC 51908 / MS32) protein is Uracil phosphoribosyltransferase.